A 563-amino-acid polypeptide reads, in one-letter code: MAGKAKFCAPEIQDNPDGWGPCSVPTAFKDIPYQPFSKADRLGKVSDWTGSVYQDRRYANKYQSQFGTGNQMFSYYHEEDETSFQLVDTSRTQRPGYMRNRNRFNQRGGYRRDNRGGRFQGQGGNMGMQNLSRGRDTRNKFQRKMQRNWGGGRHWSDKKTGGMHKRVASVTVREEWKVLEDGELDFPRLSKLNLPNVEEPETLYECGSVEYYDKAYDRVTTKNEVPLVGVNRVFHKVTTTDDPIISKLLSQGNVFATDAIISTLMTCTRSNYSWDIVVQRVGSKLFFDKRDDSEFDLLTVGETANDLNIDETSGINTPTNLSLEATFINQNFSQQVLKRGEVKTFDHPNPFVTDEDDSTVASVCYRYRKWDLGDGIQLIVRCEHDAIMQGPRGETCLVNIKTLNEWDPKMTGVDWRQKLDSQRGAVLATELKNNSCKLAKWTANSILAGSEYLKLGYVSRVNFLDTSKHTILGTQQFRPREFATQIALNMDNAWGVLRCIIDICMKQPEGKLLILKDPSKGVIRIYDIPNSTFETDEEDDDDDEDDVENDDGDDEKDEGDGED.

The segment at 95–136 is disordered; the sequence is PGYMRNRNRFNQRGGYRRDNRGGRFQGQGGNMGMQNLSRGRD. The segment at 294-308 is RNA gate; the sequence is EFDLLTVGETANDLN. The disordered stretch occupies residues 528–563; the sequence is IPNSTFETDEEDDDDDEDDVENDDGDDEKDEGDGED. The span at 534 to 563 shows a compositional bias: acidic residues; sequence ETDEEDDDDDEDDVENDDGDDEKDEGDGED.

This sequence belongs to the eIF-3 subunit D family. As to quaternary structure, component of the eukaryotic translation initiation factor 3 (eIF-3) complex.

The protein resides in the cytoplasm. Its function is as follows. mRNA cap-binding component of the eukaryotic translation initiation factor 3 (eIF-3) complex, which is involved in protein synthesis of a specialized repertoire of mRNAs and, together with other initiation factors, stimulates binding of mRNA and methionyl-tRNAi to the 40S ribosome. The eIF-3 complex specifically targets and initiates translation of a subset of mRNAs involved in cell proliferation. In the eIF-3 complex, eif3d specifically recognizes and binds the 7-methylguanosine cap of a subset of mRNAs. In Nematostella vectensis (Starlet sea anemone), this protein is Eukaryotic translation initiation factor 3 subunit D.